A 368-amino-acid polypeptide reads, in one-letter code: MSESPKKVIVGMSGGVDSSVSAWLLQQQGYQVEGLFMKNWEEDDGEEYCTAAADLADAQAVCDKLGIELHTVNFAAEYWDNVFELFLEEYKAGRTPNPDILCNKEIKFKAFLEFAAEDLGADYIATGHYVRRADVNGKSRLLRGLDGNKDQSYFLYTLGHEQIAQSLFPVGELEKPQVRKIAEDLGLVTAKKKDSTGICFIGERKFRDFLGRYLPAQPGKIITVDGDEIGEHQGLMYHTLGQRKGLGIGGTKDGSEDPWYVVDKDVENNVLIVAQGHEHPRLMSVGLIAQQLHWVDREPFTGTLRCTVKTRYRQTDIPCTINALNDDRIEVIFDEPVAAVTPGQSAVFYSGEVCLGGGIIEQRLPLTV.

Residues G11 to S18 and M37 contribute to the ATP site. Residues N97–D99 are interaction with target base in tRNA. The active-site Nucleophile is C102. An intrachain disulfide couples C102 to C199. Residue G127 participates in ATP binding. An interaction with tRNA region spans residues K149–Q151. Residue C199 is the Cysteine persulfide intermediate of the active site. Residues R311–Y312 form an interaction with tRNA region.

This sequence belongs to the MnmA/TRMU family. As to quaternary structure, interacts with TusE.

It localises to the cytoplasm. The catalysed reaction is S-sulfanyl-L-cysteinyl-[protein] + uridine(34) in tRNA + AH2 + ATP = 2-thiouridine(34) in tRNA + L-cysteinyl-[protein] + A + AMP + diphosphate + H(+). In terms of biological role, catalyzes the 2-thiolation of uridine at the wobble position (U34) of tRNA(Lys), tRNA(Glu) and tRNA(Gln), leading to the formation of s(2)U34, the first step of tRNA-mnm(5)s(2)U34 synthesis. Sulfur is provided by IscS, via a sulfur-relay system. Binds ATP and its substrate tRNAs. This is tRNA-specific 2-thiouridylase MnmA from Salmonella typhimurium (strain LT2 / SGSC1412 / ATCC 700720).